A 212-amino-acid chain; its full sequence is Methylthioribulose-1-phosphate dehydratase (212 aa).

Residues His-98 and His-100 each coordinate Zn(2+).

This sequence belongs to the aldolase class II family. MtnB subfamily. Zn(2+) serves as cofactor.

The catalysed reaction is 5-(methylsulfanyl)-D-ribulose 1-phosphate = 5-methylsulfanyl-2,3-dioxopentyl phosphate + H2O. It functions in the pathway amino-acid biosynthesis; L-methionine biosynthesis via salvage pathway; L-methionine from S-methyl-5-thio-alpha-D-ribose 1-phosphate: step 2/6. In terms of biological role, catalyzes the dehydration of methylthioribulose-1-phosphate (MTRu-1-P) into 2,3-diketo-5-methylthiopentyl-1-phosphate (DK-MTP-1-P). This chain is Methylthioribulose-1-phosphate dehydratase, found in Picosynechococcus sp. (strain ATCC 27264 / PCC 7002 / PR-6) (Agmenellum quadruplicatum).